The primary structure comprises 389 residues: Phosphoribosylformylglycinamidine cyclo-ligase, chloroplastic (389 aa).

Residues 1-58 (MEARILQSSSSCYSSLYAVNRSRFSSVSSPKPFSVSFAQTTRTRTRVLSMSKKDGRTD) constitute a chloroplast transit peptide. Positions 46–65 (RVLSMSKKDGRTDKDDDTDS) are disordered.

This sequence belongs to the AIR synthase family.

It localises to the plastid. It is found in the chloroplast. The catalysed reaction is 2-formamido-N(1)-(5-O-phospho-beta-D-ribosyl)acetamidine + ATP = 5-amino-1-(5-phospho-beta-D-ribosyl)imidazole + ADP + phosphate + H(+). It functions in the pathway purine metabolism; IMP biosynthesis via de novo pathway; 5-amino-1-(5-phospho-D-ribosyl)imidazole from N(2)-formyl-N(1)-(5-phospho-D-ribosyl)glycinamide: step 2/2. The polypeptide is Phosphoribosylformylglycinamidine cyclo-ligase, chloroplastic (PUR5) (Arabidopsis thaliana (Mouse-ear cress)).